An 818-amino-acid chain; its full sequence is Patatin-like phospholipase domain-containing protein YALI0D16379g (818 aa).

2 disordered regions span residues 1–50 and 154–178; these read MLKL…RDVN and EEKR…KTKE. The segment covering 22 to 38 has biased composition (polar residues); the sequence is SQQLTLDSPEGSETSSR. Positions 164-178 are enriched in basic and acidic residues; the sequence is KDKEGSEGDKTKTKE. Residues 223–243 form a helical membrane-spanning segment; it reads WPALFFIGMWLLFLTTIYASV. A PNPLA domain is found at 398 to 589; sequence LCLSGGGCFA…RTDIPVDALN (192 aa). A GXSXG motif is present at residues 429-433; that stretch reads GTSGG. Ser431 serves as the catalytic Nucleophile. Asp576 acts as the Proton acceptor in catalysis. Positions 781–805 are disordered; sequence AGTDISSSNSDYDHEPQWEMDEGDS.

It belongs to the PLPL family.

It is found in the membrane. Its function is as follows. Probable lipid hydrolase. This chain is Patatin-like phospholipase domain-containing protein YALI0D16379g, found in Yarrowia lipolytica (strain CLIB 122 / E 150) (Yeast).